We begin with the raw amino-acid sequence, 516 residues long: Gastrula zinc finger protein XlCGF53.1 (516 aa).

2 disordered regions span residues 1 to 33 and 200 to 220; these read MGMW…GKKE and GNQS…TDKP. The span at 200-218 shows a compositional bias: polar residues; the sequence is GNQSDCSINPLTEQIQGTD. 7 C2H2-type zinc fingers span residues 312-334, 354-376, 382-404, 410-432, 438-460, 466-488, and 494-516; these read YICS…QKTH, FPCS…QSSH, YACS…LKLH, FPCS…RRVH, YSCS…QRTH, and FSCT…HRTH.

It belongs to the krueppel C2H2-type zinc-finger protein family.

Its subcellular location is the nucleus. Its function is as follows. May be involved in transcriptional regulation. This Xenopus laevis (African clawed frog) protein is Gastrula zinc finger protein XlCGF53.1.